We begin with the raw amino-acid sequence, 162 residues long: Putative 4-hydroxy-4-methyl-2-oxoglutarate aldolase (162 aa).

Residues 75–78 (GDML) and R97 contribute to the substrate site. An a divalent metal cation-binding site is contributed by D98.

It belongs to the class II aldolase/RraA-like family. In terms of assembly, homotrimer. The cofactor is a divalent metal cation.

It catalyses the reaction 4-hydroxy-4-methyl-2-oxoglutarate = 2 pyruvate. The catalysed reaction is oxaloacetate + H(+) = pyruvate + CO2. Its function is as follows. Catalyzes the aldol cleavage of 4-hydroxy-4-methyl-2-oxoglutarate (HMG) into 2 molecules of pyruvate. Also contains a secondary oxaloacetate (OAA) decarboxylase activity due to the common pyruvate enolate transition state formed following C-C bond cleavage in the retro-aldol and decarboxylation reactions. This chain is Putative 4-hydroxy-4-methyl-2-oxoglutarate aldolase, found in Pseudomonas aeruginosa (strain LESB58).